A 403-amino-acid polypeptide reads, in one-letter code: Riboflavin biosynthesis protein RibBA (403 aa).

Residues 1–204 (MKNKVFASIG…IGELVNYRRR (204 aa)) are DHBP synthase. Residues 30-31 (RE), Asp35, 143-147 (RTGHT), and Glu167 each bind D-ribulose 5-phosphate. A Mg(2+)-binding site is contributed by Glu31. His146 serves as a coordination point for Mg(2+). The GTP cyclohydrolase II stretch occupies residues 205–403 (TEKFISEIVN…EKMGHMLKKV (199 aa)). Residue 255-259 (RVHSS) participates in GTP binding. 3 residues coordinate Zn(2+): Cys260, Cys271, and Cys273. Residues Gln276, 298 to 300 (EGR), and Thr320 contribute to the GTP site. Residue Asp332 is the Proton acceptor; for GTP cyclohydrolase activity of the active site. Residue Arg334 is the Nucleophile; for GTP cyclohydrolase activity of the active site. GTP contacts are provided by Thr355 and Lys360.

It in the N-terminal section; belongs to the DHBP synthase family. The protein in the C-terminal section; belongs to the GTP cyclohydrolase II family. Mg(2+) serves as cofactor. It depends on Mn(2+) as a cofactor. The cofactor is Zn(2+).

It carries out the reaction D-ribulose 5-phosphate = (2S)-2-hydroxy-3-oxobutyl phosphate + formate + H(+). The catalysed reaction is GTP + 4 H2O = 2,5-diamino-6-hydroxy-4-(5-phosphoribosylamino)-pyrimidine + formate + 2 phosphate + 3 H(+). It functions in the pathway cofactor biosynthesis; riboflavin biosynthesis; 2-hydroxy-3-oxobutyl phosphate from D-ribulose 5-phosphate: step 1/1. It participates in cofactor biosynthesis; riboflavin biosynthesis; 5-amino-6-(D-ribitylamino)uracil from GTP: step 1/4. Catalyzes the conversion of D-ribulose 5-phosphate to formate and 3,4-dihydroxy-2-butanone 4-phosphate. Functionally, catalyzes the conversion of GTP to 2,5-diamino-6-ribosylamino-4(3H)-pyrimidinone 5'-phosphate (DARP), formate and pyrophosphate. In Endomicrobium trichonymphae, this protein is Riboflavin biosynthesis protein RibBA.